The following is a 276-amino-acid chain: Diaminopimelate epimerase (276 aa).

Residues Asn13, Gln46, and Asn66 each contribute to the substrate site. Cys75 acts as the Proton donor in catalysis. Substrate is bound by residues 76-77 (GN), Asn159, Asn192, and 210-211 (ER). Cys219 acts as the Proton acceptor in catalysis. 220 to 221 (GT) is a binding site for substrate.

Belongs to the diaminopimelate epimerase family. Homodimer.

The protein localises to the cytoplasm. The catalysed reaction is (2S,6S)-2,6-diaminopimelate = meso-2,6-diaminopimelate. It participates in amino-acid biosynthesis; L-lysine biosynthesis via DAP pathway; DL-2,6-diaminopimelate from LL-2,6-diaminopimelate: step 1/1. Its function is as follows. Catalyzes the stereoinversion of LL-2,6-diaminopimelate (L,L-DAP) to meso-diaminopimelate (meso-DAP), a precursor of L-lysine and an essential component of the bacterial peptidoglycan. The polypeptide is Diaminopimelate epimerase (Chromobacterium violaceum (strain ATCC 12472 / DSM 30191 / JCM 1249 / CCUG 213 / NBRC 12614 / NCIMB 9131 / NCTC 9757 / MK)).